Here is a 288-residue protein sequence, read N- to C-terminus: Bifunctional protein FolD (288 aa).

Residues 168–170 (GRG), T195, and V236 each bind NADP(+).

Belongs to the tetrahydrofolate dehydrogenase/cyclohydrolase family. In terms of assembly, homodimer.

It carries out the reaction (6R)-5,10-methylene-5,6,7,8-tetrahydrofolate + NADP(+) = (6R)-5,10-methenyltetrahydrofolate + NADPH. The catalysed reaction is (6R)-5,10-methenyltetrahydrofolate + H2O = (6R)-10-formyltetrahydrofolate + H(+). It participates in one-carbon metabolism; tetrahydrofolate interconversion. Its function is as follows. Catalyzes the oxidation of 5,10-methylenetetrahydrofolate to 5,10-methenyltetrahydrofolate and then the hydrolysis of 5,10-methenyltetrahydrofolate to 10-formyltetrahydrofolate. The sequence is that of Bifunctional protein FolD from Mycobacterium sp. (strain JLS).